The chain runs to 617 residues: Glutamine--fructose-6-phosphate aminotransferase [isomerizing] (617 aa).

C2 (nucleophile; for GATase activity) is an active-site residue. In terms of domain architecture, Glutamine amidotransferase type-2 spans 2 to 222; it reads CGIIGLAFAE…DGEFGWISPE (221 aa). SIS domains follow at residues 293–432 and 466–607; these read AAGL…EAGR and AASL…PDKP. K612 functions as the For Fru-6P isomerization activity in the catalytic mechanism.

In terms of assembly, homodimer.

It is found in the cytoplasm. The catalysed reaction is D-fructose 6-phosphate + L-glutamine = D-glucosamine 6-phosphate + L-glutamate. Catalyzes the first step in hexosamine metabolism, converting fructose-6P into glucosamine-6P using glutamine as a nitrogen source. This chain is Glutamine--fructose-6-phosphate aminotransferase [isomerizing], found in Aeropyrum pernix (strain ATCC 700893 / DSM 11879 / JCM 9820 / NBRC 100138 / K1).